The primary structure comprises 279 residues: Movement protein (279 aa).

The segment at 246-279 is disordered; it reads SESEELNVESPPAAIGSSSASRSEAFRPQVVNGL. Residues 254–268 show a composition bias toward low complexity; the sequence is ESPPAAIGSSSASRS.

Belongs to the cucumovirus movement protein family.

Its subcellular location is the host cell junction. The protein localises to the host plasmodesma. Its function is as follows. Transports viral genome to neighboring plant cells directly through plasmosdesmata, without any budding. The movement protein allows efficient cell to cell propagation, by bypassing the host cell wall barrier. Acts by forming a tubular structure at the host plasmodesmata, enlarging it enough to allow free passage of virion capsids. The chain is Movement protein from Cucumber mosaic virus (strain O) (CMV).